Consider the following 149-residue polypeptide: MKIILKENFETLGKAGEIVKVADGYARNFLIPKGIAAEANLRNIKALEHDKQNIVRKAEKERKRHESLAASLSGVTCTIARRVGEQDKLFGSVTAMDIEEALLAQNVKIDRKSIVLDEPIKAIGEFPIVIKLGAGVTAEIKVNVVPEQA.

It belongs to the bacterial ribosomal protein bL9 family.

Its function is as follows. Binds to the 23S rRNA. The protein is Large ribosomal subunit protein bL9 of Syntrophus aciditrophicus (strain SB).